The primary structure comprises 614 residues: MKQSSVVDLLLLLLAIALLATPAFSDLVLSKVERRIDVTSQIARVTKTLKVVNSGSESVSEFALTFPKFLGNNLAYLSVAPSEGKGKSKRTLVNLSVREADQKGLPDSISVYSVALPKPLSKGDTLTLEVVAAFTNVLQPFPEKITQGEIHLVMLQESAQYLSPYAVESQSLSIKLPNARIESYTKFENTKLQGSELKYGPYKNLQSYSYSPIVVHFESKAAFAVAEKLVREIEVSHWGNVQVTENYNVVHRGAQLKGEFSRLDFQARPNPRGASAFRHLLARLPPRAHSIYYRDDIGNISTSEMKSDSKKTELLIEPRFPLFGGWKTFFTIGYGLPLTDFLFASEGKRFLNISFGSPILDLVTEKLIVQVVLPEGSKDISVTTPFAVKQSQEIKYSHLDIAGRPVVVLEKNNVVPDHNQHIQVYYKFSNINLLSEPLMLISGFFILFITCIIYTRADISISKSSPSYLAKLQWDEVLATLQEVQSIVQKCLATHDKLEASLRDLSRTGDIQTCKAARKSTDSLLKDLSKELKPLLGFLQSFPSASHISPKVEELVVKEKELQEKLMAKHTTVVEGYEKKSSGRDIENRIASQQQKIIALRQEIEDLLEFIDEI.

The signal sequence occupies residues 1-25 (MKQSSVVDLLLLLLAIALLATPAFS). Residues 26 to 432 (DLVLSKVERR…QVYYKFSNIN (407 aa)) lie on the Lumenal side of the membrane. 2 N-linked (GlcNAc...) asparagine glycosylation sites follow: Asn-94 and Asn-299. A Glycyl lysine isopeptide (Lys-Gly) (interchain with G-Cter in ubiquitin) cross-link involves residue Lys-311. Asn-352 is a glycosylation site (N-linked (GlcNAc...) asparagine). A helical membrane pass occupies residues 433–453 (LLSEPLMLISGFFILFITCII). Residues 454–614 (YTRADISISK…EDLLEFIDEI (161 aa)) are Cytoplasmic-facing.

The protein belongs to the OST1 family. As to quaternary structure, component of the oligosaccharyltransferase (OST) complex.

It localises to the endoplasmic reticulum membrane. It functions in the pathway protein modification; protein glycosylation. In terms of biological role, subunit of the oligosaccharyl transferase (OST) complex that catalyzes the initial transfer of a defined glycan (Glc(3)Man(9)GlcNAc(2) in eukaryotes) from the lipid carrier dolichol-pyrophosphate to an asparagine residue within an Asn-X-Ser/Thr consensus motif in nascent polypeptide chains, the first step in protein N-glycosylation. N-glycosylation occurs cotranslationally and the complex associates with the Sec61 complex at the channel-forming translocon complex that mediates protein translocation across the endoplasmic reticulum (ER). All subunits are required for a maximal enzyme activity. This is Dolichyl-diphosphooligosaccharide--protein glycosyltransferase subunit 1A (OST1A) from Arabidopsis thaliana (Mouse-ear cress).